A 359-amino-acid polypeptide reads, in one-letter code: UDP-N-acetylglucosamine--N-acetylmuramyl-(pentapeptide) pyrophosphoryl-undecaprenol N-acetylglucosamine transferase (359 aa).

Residues 13–15 (TAG), Asn125, Arg161, Ser193, Ile241, and Gln285 contribute to the UDP-N-acetyl-alpha-D-glucosamine site.

The protein belongs to the glycosyltransferase 28 family. MurG subfamily.

Its subcellular location is the cell membrane. It carries out the reaction di-trans,octa-cis-undecaprenyl diphospho-N-acetyl-alpha-D-muramoyl-L-alanyl-D-glutamyl-meso-2,6-diaminopimeloyl-D-alanyl-D-alanine + UDP-N-acetyl-alpha-D-glucosamine = di-trans,octa-cis-undecaprenyl diphospho-[N-acetyl-alpha-D-glucosaminyl-(1-&gt;4)]-N-acetyl-alpha-D-muramoyl-L-alanyl-D-glutamyl-meso-2,6-diaminopimeloyl-D-alanyl-D-alanine + UDP + H(+). Its pathway is cell wall biogenesis; peptidoglycan biosynthesis. Cell wall formation. Catalyzes the transfer of a GlcNAc subunit on undecaprenyl-pyrophosphoryl-MurNAc-pentapeptide (lipid intermediate I) to form undecaprenyl-pyrophosphoryl-MurNAc-(pentapeptide)GlcNAc (lipid intermediate II). This Corynebacterium diphtheriae (strain ATCC 700971 / NCTC 13129 / Biotype gravis) protein is UDP-N-acetylglucosamine--N-acetylmuramyl-(pentapeptide) pyrophosphoryl-undecaprenol N-acetylglucosamine transferase.